The primary structure comprises 682 residues: Probable xyloglucan glycosyltransferase 6 (682 aa).

2 consecutive transmembrane segments (helical) span residues 109–129 (LIKG…AAYF) and 173–193 (IVLF…CFWI). Asp260 is a catalytic residue. Substrate is bound by residues Asp319 and Asp321. The active site involves Asp413. 2 consecutive transmembrane segments (helical) span residues 491–511 (LILP…TMFF) and 516–536 (LPSW…IIPA). Position 608 is a phosphoserine (Ser608). 2 helical membrane-spanning segments follow: residues 632–651 (LYRT…VRSL) and 657–677 (IHFY…LDLI).

This sequence belongs to the glycosyltransferase 2 family. Plant cellulose synthase-like C subfamily. Homodimer. As to expression, mainly expressed in flowers and seeds, and, to a lower extent, in seedlings, roots, leaves and stems.

Its subcellular location is the golgi apparatus membrane. Functionally, probable beta-1,4-glucan synthase rather involved in the synthesis of the xyloglucan backbone than cellulose. Seems to work simultaneously with xyloglucan 6-xylosyltransferase. Xyloglucan is a noncellulosic polysaccharides of plant cell wall and consists of a glucan backbone substituted by xylose, galactose and fucose. This is Probable xyloglucan glycosyltransferase 6 from Arabidopsis thaliana (Mouse-ear cress).